We begin with the raw amino-acid sequence, 199 residues long: Ribonuclease HII (199 aa).

The 199-residue stretch at 1 to 199 (MCVCGIDEAG…TYKNLVQGHI (199 aa)) folds into the RNase H type-2 domain. A divalent metal cation is bound by residues Asp7, Glu8, and Asp97.

This sequence belongs to the RNase HII family. The cofactor is Mn(2+). Mg(2+) serves as cofactor.

It localises to the cytoplasm. It carries out the reaction Endonucleolytic cleavage to 5'-phosphomonoester.. In terms of biological role, endonuclease that specifically degrades the RNA of RNA-DNA hybrids. In Picrophilus torridus (strain ATCC 700027 / DSM 9790 / JCM 10055 / NBRC 100828 / KAW 2/3), this protein is Ribonuclease HII.